Consider the following 147-residue polypeptide: Nucleoside diphosphate kinase (147 aa).

Residues lysine 11, phenylalanine 59, arginine 87, threonine 93, arginine 104, and asparagine 114 each coordinate ATP. Residue histidine 117 is the Pros-phosphohistidine intermediate of the active site.

The protein belongs to the NDK family. Homotetramer. The cofactor is Mg(2+).

Its subcellular location is the cytoplasm. The enzyme catalyses a 2'-deoxyribonucleoside 5'-diphosphate + ATP = a 2'-deoxyribonucleoside 5'-triphosphate + ADP. It carries out the reaction a ribonucleoside 5'-diphosphate + ATP = a ribonucleoside 5'-triphosphate + ADP. Its function is as follows. Major role in the synthesis of nucleoside triphosphates other than ATP. The ATP gamma phosphate is transferred to the NDP beta phosphate via a ping-pong mechanism, using a phosphorylated active-site intermediate. The polypeptide is Nucleoside diphosphate kinase (Anaeromyxobacter dehalogenans (strain 2CP-C)).